The sequence spans 369 residues: 3,7-dimethylxanthine N-methyltransferase TCS1 (369 aa).

Y24 is a binding site for S-adenosyl-L-homocysteine. Caffeine is bound at residue T31. 6 residues coordinate S-adenosyl-L-homocysteine: C66, N71, D103, L104, S138, and F139. Caffeine is bound by residues Y156, H159, and W160. N177 contacts Mg(2+). R225 contacts caffeine. The Mg(2+) site is built by D263, F265, and N266. F321 contacts caffeine.

The protein belongs to the methyltransferase superfamily. Type-7 methyltransferase family. Mg(2+) is required as a cofactor. In terms of tissue distribution, expressed in young leaves and flowers.

It carries out the reaction 7-methylxanthine + S-adenosyl-L-methionine = theobromine + S-adenosyl-L-homocysteine + H(+). The catalysed reaction is theobromine + S-adenosyl-L-methionine = caffeine + S-adenosyl-L-homocysteine + H(+). The enzyme catalyses 1,7-dimethylxanthine + S-adenosyl-L-methionine = caffeine + S-adenosyl-L-homocysteine + H(+). It functions in the pathway alkaloid biosynthesis. In terms of biological role, involved in the biosynthesis of caffeine. Catalyzes the conversion of 7-methylxanthine (7mX) to theobromine and of theobromine to caffeine. Has 3-N- and 1-N-methylation activity. This chain is 3,7-dimethylxanthine N-methyltransferase TCS1, found in Camellia sinensis (Tea plant).